Consider the following 757-residue polypeptide: Palmitoyltransferase AKR1 (757 aa).

2 stretches are compositionally biased toward polar residues: residues 1 to 20 (MSDI…STDP) and 36 to 46 (ESISSLQPIVS). The disordered stretch occupies residues 1–54 (MSDINTESGESTSLPNSTDPPLSDVNIDVEDDDTAESISSLQPIVSNTTNPPEE). The Cytoplasmic portion of the chain corresponds to 1–307 (MSDINTESGE…KLFKKSDHAK (307 aa)). ANK repeat units follow at residues 58–88 (PVLG…DLNT), 92–121 (GDIT…DVNA), 126–155 (LEAT…DPTM), 159–188 (QGFN…AKGI), 197–226 (KGRT…STKI), and 230–259 (GGFT…DFFL). Residues 308–328 (VITFFVPLVALSIIFILFTHL) form a helical membrane-spanning segment. The Lumenal segment spans residues 329–331 (HPL). The chain crosses the membrane as a helical span at residues 332-352 (FALLISLIFGLAVNKALKELI). At 353-375 (LPSYSNYGLHSTSLLKSPFLSGT) the chain is on the cytoplasmic side. The chain crosses the membrane as a helical span at residues 376–396 (FFGSLLLLTIVWIFKIAPFTI). Residues 397–402 (FKSRLL) are Lumenal-facing. The chain crosses the membrane as a helical span at residues 403–423 (TNFFMFLILMQIYYLFIKLIF). Over 424–498 (SDPGCVPIET…YNDIGLKNHK (75 aa)) the chain is Cytoplasmic. A DHHC domain is found at 455-505 (NFCLETWIRKPLRSHFSTLNTHNVARFDHFCPWIYNDIGLKNHKNFMWFIL). Cys485 serves as the catalytic S-palmitoyl cysteine intermediate. Residues 499–519 (NFMWFILLTEVGIWFFISLTM) traverse the membrane as a helical segment. Topologically, residues 520–550 (KYFDILEDTNEDVACFLLGDDELCAGFVYDR) are lumenal. The helical transmembrane segment at 551–571 (FTFLIALWALIQSVWVGFLIV) threads the bilayer. Residues 572–757 (VQVFQTFTGV…YPEPTGPESV (186 aa)) are Cytoplasmic-facing. The interval 614–647 (ELRNDDDDTAASRTGNNPNHSNGTTIPSEGSRIN) is disordered. Over residues 624–646 (ASRTGNNPNHSNGTTIPSEGSRI) the composition is skewed to polar residues.

This sequence belongs to the DHHC palmitoyltransferase family. AKR/ZDHHC17 subfamily.

It is found in the early endosome membrane. The protein resides in the golgi apparatus membrane. It carries out the reaction L-cysteinyl-[protein] + hexadecanoyl-CoA = S-hexadecanoyl-L-cysteinyl-[protein] + CoA. Its function is as follows. Palmitoyltransferase specific for casein kinase 1. The protein is Palmitoyltransferase AKR1 (AKR1) of Naumovozyma castellii (Yeast).